We begin with the raw amino-acid sequence, 255 residues long: Uracil-DNA glycosylase (255 aa).

Catalysis depends on D93, which acts as the Proton acceptor.

It belongs to the uracil-DNA glycosylase (UDG) superfamily. UNG family.

It localises to the host nucleus. It carries out the reaction Hydrolyzes single-stranded DNA or mismatched double-stranded DNA and polynucleotides, releasing free uracil.. Functionally, excises uracil residues from the DNA which can arise as a result of misincorporation of dUMP residues by DNA polymerase or deamination of cytosines. Therefore may reduce deleterious uracil incorporation into the viral genome, particularly in terminally differentiated cells which lack DNA repair enzymes. The polypeptide is Uracil-DNA glycosylase (U81) (Human herpesvirus 6A (strain Uganda-1102) (HHV-6 variant A)).